The chain runs to 149 residues: Large ribosomal subunit protein uL13 (149 aa).

The protein belongs to the universal ribosomal protein uL13 family. In terms of assembly, part of the 50S ribosomal subunit.

Its function is as follows. This protein is one of the early assembly proteins of the 50S ribosomal subunit, although it is not seen to bind rRNA by itself. It is important during the early stages of 50S assembly. The chain is Large ribosomal subunit protein uL13 from Cyanothece sp. (strain PCC 7425 / ATCC 29141).